Reading from the N-terminus, the 372-residue chain is Queuine tRNA-ribosyltransferase (372 aa).

The active-site Proton acceptor is Asp89. Substrate contacts are provided by residues 89–93 (DSGGF), Asp161, and Gly232. The tract at residues 262-268 (GIGDLPS) is RNA binding. The active-site Nucleophile is the Asp281. An RNA binding; important for wobble base 34 recognition region spans residues 286 to 290 (TKAAR). Zn(2+) contacts are provided by Cys319, Cys321, Cys324, and His351.

Belongs to the queuine tRNA-ribosyltransferase family. Homodimer. Within each dimer, one monomer is responsible for RNA recognition and catalysis, while the other monomer binds to the replacement base PreQ1. It depends on Zn(2+) as a cofactor.

The catalysed reaction is 7-aminomethyl-7-carbaguanine + guanosine(34) in tRNA = 7-aminomethyl-7-carbaguanosine(34) in tRNA + guanine. It participates in tRNA modification; tRNA-queuosine biosynthesis. Catalyzes the base-exchange of a guanine (G) residue with the queuine precursor 7-aminomethyl-7-deazaguanine (PreQ1) at position 34 (anticodon wobble position) in tRNAs with GU(N) anticodons (tRNA-Asp, -Asn, -His and -Tyr). Catalysis occurs through a double-displacement mechanism. The nucleophile active site attacks the C1' of nucleotide 34 to detach the guanine base from the RNA, forming a covalent enzyme-RNA intermediate. The proton acceptor active site deprotonates the incoming PreQ1, allowing a nucleophilic attack on the C1' of the ribose to form the product. After dissociation, two additional enzymatic reactions on the tRNA convert PreQ1 to queuine (Q), resulting in the hypermodified nucleoside queuosine (7-(((4,5-cis-dihydroxy-2-cyclopenten-1-yl)amino)methyl)-7-deazaguanosine). The protein is Queuine tRNA-ribosyltransferase of Chlamydia abortus (strain DSM 27085 / S26/3) (Chlamydophila abortus).